A 377-amino-acid chain; its full sequence is Nitric oxide reductase FlRd-NAD(+) reductase (377 aa).

It belongs to the FAD-dependent oxidoreductase family. FAD is required as a cofactor.

Its subcellular location is the cytoplasm. It carries out the reaction 2 reduced [nitric oxide reductase rubredoxin domain] + NAD(+) + H(+) = 2 oxidized [nitric oxide reductase rubredoxin domain] + NADH. It functions in the pathway nitrogen metabolism; nitric oxide reduction. Its function is as follows. One of at least two accessory proteins for anaerobic nitric oxide (NO) reductase. Reduces the rubredoxin moiety of NO reductase. In Salmonella paratyphi B (strain ATCC BAA-1250 / SPB7), this protein is Nitric oxide reductase FlRd-NAD(+) reductase.